The following is a 315-amino-acid chain: Cytosolic Fe-S cluster assembly factor nubp1-A (315 aa).

Positions 1–23 (MADIPDNAPQHCPGTDSTEAGKS) are disordered. Residues Cys-12, Cys-26, Cys-29, and Cys-35 each coordinate [4Fe-4S] cluster. 66-73 (GKGGVGKS) is an ATP binding site. [4Fe-4S] cluster is bound by residues Cys-239 and Cys-242.

Belongs to the Mrp/NBP35 ATP-binding proteins family. NUBP1/NBP35 subfamily. As to quaternary structure, heterotetramer of 2 nubp1 and 2 nubp2 chains. It depends on [4Fe-4S] cluster as a cofactor.

The protein resides in the cytoplasm. Component of the cytosolic iron-sulfur (Fe/S) protein assembly (CIA) machinery. Required for maturation of extramitochondrial Fe-S proteins. The nubp1-nubp2 heterotetramer forms a Fe-S scaffold complex, mediating the de novo assembly of an Fe-S cluster and its transfer to target apoproteins. The protein is Cytosolic Fe-S cluster assembly factor nubp1-A (nubp1-A) of Xenopus laevis (African clawed frog).